Here is a 130-residue protein sequence, read N- to C-terminus: MSMTDPISDMLTRVRNGQNAGKVEVSMPSSKLKVSIARVLKEEGYIEDCKVIADAKPTLVIRLKYYGGKPVIEDIHRASRPGLRMYKSRDKLPRIRGGLGIAIVSTSRGVMTDKTARSIGEGGEVLCYVA.

This sequence belongs to the universal ribosomal protein uS8 family. Part of the 30S ribosomal subunit. Contacts proteins S5 and S12.

In terms of biological role, one of the primary rRNA binding proteins, it binds directly to 16S rRNA central domain where it helps coordinate assembly of the platform of the 30S subunit. The sequence is that of Small ribosomal subunit protein uS8 from Nitrosococcus oceani (strain ATCC 19707 / BCRC 17464 / JCM 30415 / NCIMB 11848 / C-107).